Here is a 521-residue protein sequence, read N- to C-terminus: Bifunctional purine biosynthesis protein PurH (521 aa).

In terms of domain architecture, MGS-like spans methionine 1–valine 145.

The protein belongs to the PurH family.

It carries out the reaction (6R)-10-formyltetrahydrofolate + 5-amino-1-(5-phospho-beta-D-ribosyl)imidazole-4-carboxamide = 5-formamido-1-(5-phospho-D-ribosyl)imidazole-4-carboxamide + (6S)-5,6,7,8-tetrahydrofolate. It catalyses the reaction IMP + H2O = 5-formamido-1-(5-phospho-D-ribosyl)imidazole-4-carboxamide. It participates in purine metabolism; IMP biosynthesis via de novo pathway; 5-formamido-1-(5-phospho-D-ribosyl)imidazole-4-carboxamide from 5-amino-1-(5-phospho-D-ribosyl)imidazole-4-carboxamide (10-formyl THF route): step 1/1. Its pathway is purine metabolism; IMP biosynthesis via de novo pathway; IMP from 5-formamido-1-(5-phospho-D-ribosyl)imidazole-4-carboxamide: step 1/1. The protein is Bifunctional purine biosynthesis protein PurH of Burkholderia vietnamiensis (strain G4 / LMG 22486) (Burkholderia cepacia (strain R1808)).